Consider the following 269-residue polypeptide: Shikimate dehydrogenase (NADP(+)) (269 aa).

Shikimate is bound by residues Thr14–Ser16 and Thr60. The Proton acceptor role is filled by Lys64. Residue Asp76 participates in NADP(+) binding. Residues Asn85 and Asp100 each contribute to the shikimate site. NADP(+) contacts are provided by residues Gly122–Ala126 and Met208. Tyr210 is a shikimate binding site. NADP(+) is bound at residue Gly232.

The protein belongs to the shikimate dehydrogenase family. Homodimer.

It carries out the reaction shikimate + NADP(+) = 3-dehydroshikimate + NADPH + H(+). The protein operates within metabolic intermediate biosynthesis; chorismate biosynthesis; chorismate from D-erythrose 4-phosphate and phosphoenolpyruvate: step 4/7. Its function is as follows. Involved in the biosynthesis of the chorismate, which leads to the biosynthesis of aromatic amino acids. Catalyzes the reversible NADPH linked reduction of 3-dehydroshikimate (DHSA) to yield shikimate (SA). The sequence is that of Shikimate dehydrogenase (NADP(+)) from Caldivirga maquilingensis (strain ATCC 700844 / DSM 13496 / JCM 10307 / IC-167).